The sequence spans 1031 residues: uncharacterized protein (1031 aa).

Residues 50–85 (FKVQINLKTAAAHLDCSCSNDKQNCVHIIAALLKYN) form an SWIM-type zinc finger. The Helicase ATP-binding domain maps to 590–751 (RALEDNQFGG…WSCFDFVLPN (162 aa)). 603–610 (DEMGLGKT) is a binding site for ATP. The short motif at 702-705 (DEAQ) is the DEAQ box element. A Helicase C-terminal domain is found at 868 to 1022 (ALNIIYEALE…EDVNFFKSLS (155 aa)).

This sequence belongs to the SNF2/RAD54 helicase family.

This is an uncharacterized protein from Mycoplasma genitalium (strain ATCC 33530 / DSM 19775 / NCTC 10195 / G37) (Mycoplasmoides genitalium).